Here is a 156-residue protein sequence, read N- to C-terminus: Protein-export protein SecB (156 aa).

This sequence belongs to the SecB family. As to quaternary structure, homotetramer, a dimer of dimers. One homotetramer interacts with 1 SecA dimer.

The protein resides in the cytoplasm. Functionally, one of the proteins required for the normal export of preproteins out of the cell cytoplasm. It is a molecular chaperone that binds to a subset of precursor proteins, maintaining them in a translocation-competent state. It also specifically binds to its receptor SecA. In Pectobacterium carotovorum subsp. carotovorum (strain PC1), this protein is Protein-export protein SecB.